A 434-amino-acid polypeptide reads, in one-letter code: Beta-enolase (434 aa).

N-acetylalanine is present on Ala-2. Position 72 is a phosphothreonine (Thr-72). A phosphoserine mark is found at Ser-83 and Ser-157. Substrate-binding residues include His-158 and Glu-167. Position 176 is a phosphoserine (Ser-176). Thr-205 bears the Phosphothreonine mark. The active-site Proton donor is the Glu-210. Thr-229 bears the Phosphothreonine mark. Position 236 is a phosphotyrosine (Tyr-236). Asp-245 provides a ligand contact to Mg(2+). Ser-263 is modified (phosphoserine). The substrate site is built by Glu-293 and Asp-318. Mg(2+) contacts are provided by Glu-293 and Asp-318. Lys-343 serves as the catalytic Proton acceptor. Substrate-binding positions include 370-373 (SHRS) and Lys-394.

The protein belongs to the enolase family. As to quaternary structure, mammalian enolase is composed of 3 isozyme subunits, alpha, beta and gamma, which can form homodimers or heterodimers which are cell-type and development-specific. Interacts with PNKD. Mg(2+) serves as cofactor.

Its subcellular location is the cytoplasm. It catalyses the reaction (2R)-2-phosphoglycerate = phosphoenolpyruvate + H2O. It participates in carbohydrate degradation; glycolysis; pyruvate from D-glyceraldehyde 3-phosphate: step 4/5. Its function is as follows. Glycolytic enzyme that catalyzes the conversion of 2-phosphoglycerate to phosphoenolpyruvate. Appears to have a function in striated muscle development and regeneration. The polypeptide is Beta-enolase (ENO3) (Sus scrofa (Pig)).